The chain runs to 163 residues: Single-stranded DNA-binding protein 2 (163 aa).

In terms of domain architecture, SSB spans 1 to 104 (MINNVVLVGR…VVADNFQMLE (104 aa)). Positions 109–163 (REGGSTGSFNGGFNNNTSSSNSYSAPAQQTPNFGRDDSPFGNSNPMDISDDDLPF) are disordered. The segment covering 119-130 (GGFNNNTSSSNS) has biased composition (low complexity). The segment covering 131 to 140 (YSAPAQQTPN) has biased composition (polar residues). Residues 158–163 (DDDLPF) carry the Important for interaction with partner proteins motif.

In terms of assembly, homotetramer.

Functionally, plays an important role in DNA replication, recombination and repair. Binds to ssDNA and to an array of partner proteins to recruit them to their sites of action during DNA metabolism. This chain is Single-stranded DNA-binding protein 2 (ssb2), found in Streptococcus pyogenes serotype M18 (strain MGAS8232).